A 460-amino-acid chain; its full sequence is L-seryl-tRNA(Sec) selenium transferase (460 aa).

An N6-(pyridoxal phosphate)lysine modification is found at Lys-293.

It belongs to the SelA family. It depends on pyridoxal 5'-phosphate as a cofactor.

The protein resides in the cytoplasm. The catalysed reaction is L-seryl-tRNA(Sec) + selenophosphate + H(+) = L-selenocysteinyl-tRNA(Sec) + phosphate. It participates in aminoacyl-tRNA biosynthesis; selenocysteinyl-tRNA(Sec) biosynthesis; selenocysteinyl-tRNA(Sec) from L-seryl-tRNA(Sec) (bacterial route): step 1/1. Converts seryl-tRNA(Sec) to selenocysteinyl-tRNA(Sec) required for selenoprotein biosynthesis. In Haemophilus ducreyi (strain 35000HP / ATCC 700724), this protein is L-seryl-tRNA(Sec) selenium transferase.